The chain runs to 449 residues: Histone PARylation factor 1-like (449 aa).

Residues 3-28 (KEDCKYWDKCYQQNPAHLSKYNHPKK) form a CCHC-type zinc finger. Residues 18–93 (AHLSKYNHPK…AKGSYEAETE (76 aa)) are disordered. 2 stretches are compositionally biased toward basic and acidic residues: residues 28-41 (KQQE…EGKK) and 54-69 (EQKK…KDKS). Residue Ser72 is modified to Phosphoserine. The Proton donor role is filled by Glu384.

This sequence belongs to the HPF1 family.

The protein resides in the chromosome. The protein localises to the nucleus. In terms of biological role, cofactor for serine ADP-ribosylation that confers serine specificity on Parp. Switches the amino acid specificity of Parp from aspartate or glutamate to serine residues. Acts by completing the active site of Parp: forms a composite active site composed of residues from HPF1/CG1218 and Parp. The polypeptide is Histone PARylation factor 1-like (Drosophila melanogaster (Fruit fly)).